The chain runs to 435 residues: Eukaryotic peptide chain release factor subunit 1 (435 aa).

Belongs to the eukaryotic release factor 1 family. Heterodimer of two subunits, one of which binds GTP.

It is found in the cytoplasm. Directs the termination of nascent peptide synthesis (translation) in response to the termination codons UAA, UAG and UGA. This chain is Eukaryotic peptide chain release factor subunit 1 (SU2), found in Podospora anserina (Pleurage anserina).